The sequence spans 161 residues: Nucleotide-binding protein GM21_0633 (161 aa).

Belongs to the YajQ family.

Its function is as follows. Nucleotide-binding protein. This chain is Nucleotide-binding protein GM21_0633, found in Geobacter sp. (strain M21).